Here is a 70-residue protein sequence, read N- to C-terminus: Putative defensin-like protein 73 (70 aa).

An N-terminal signal peptide occupies residues 1 to 29 (MNCKIEFMSFLVMTSIVILFLFVSGKVEA). Cystine bridges form between Cys-33–Cys-68, Cys-37–Cys-57, Cys-43–Cys-66, and Cys-47–Cys-67.

The protein belongs to the DEFL family.

It is found in the secreted. The protein is Putative defensin-like protein 73 (LCR44) of Arabidopsis thaliana (Mouse-ear cress).